The chain runs to 342 residues: Ribosomal RNA small subunit methyltransferase C (342 aa).

This sequence belongs to the methyltransferase superfamily. RsmC family. As to quaternary structure, monomer.

It localises to the cytoplasm. It catalyses the reaction guanosine(1207) in 16S rRNA + S-adenosyl-L-methionine = N(2)-methylguanosine(1207) in 16S rRNA + S-adenosyl-L-homocysteine + H(+). Functionally, specifically methylates the guanine in position 1207 of 16S rRNA in the 30S particle. The polypeptide is Ribosomal RNA small subunit methyltransferase C (Shewanella sp. (strain MR-4)).